Reading from the N-terminus, the 291-residue chain is Small ribosomal subunit biogenesis GTPase RsgA 2 (291 aa).

One can recognise a CP-type G domain in the interval E63 to I221. GTP-binding positions include S112–D115 and G164–T172. 4 residues coordinate Zn(2+): C245, C250, H252, and C258.

It belongs to the TRAFAC class YlqF/YawG GTPase family. RsgA subfamily. Monomer. Associates with 30S ribosomal subunit, binds 16S rRNA. Requires Zn(2+) as cofactor.

It is found in the cytoplasm. Functionally, one of several proteins that assist in the late maturation steps of the functional core of the 30S ribosomal subunit. Helps release RbfA from mature subunits. May play a role in the assembly of ribosomal proteins into the subunit. Circularly permuted GTPase that catalyzes slow GTP hydrolysis, GTPase activity is stimulated by the 30S ribosomal subunit. The protein is Small ribosomal subunit biogenesis GTPase RsgA 2 of Listeria innocua serovar 6a (strain ATCC BAA-680 / CLIP 11262).